Reading from the N-terminus, the 1351-residue chain is Spike glycoprotein (1351 aa).

The first 12 residues, 1–12, serve as a signal peptide directing secretion; the sequence is MFLIIFILPTTL. Topologically, residues 13-1295 are extracellular; sequence AVIGDFNCTN…GTYEMYVKWP (1283 aa). The 281-residue stretch at 14-294 folds into the BetaCoV S1-NTD domain; it reads VIGDFNCTNS…SFLSEIQCKT (281 aa). Asn-19, Asn-29, Asn-58, Asn-114, Asn-132, Asn-171, Asn-188, Asn-192, and Asn-251 each carry an N-linked (GlcNAc...) asparagine; by host glycan. 3 disulfide bridges follow: Cys-20–Cys-156, Cys-151–Cys-183, and Cys-163–Cys-242. Intrachain disulfides connect Cys-282–Cys-292 and Cys-327–Cys-352. Positions 325 to 605 constitute a BetaCoV S1-CTD domain; sequence PDCDIDNWLN…GINSGTTCSN (281 aa). 2 N-linked (GlcNAc...) asparagine; by host glycosylation sites follow: Asn-335 and Asn-355. Disulfide bonds link Cys-370–Cys-423 and Cys-382–Cys-603. 10 N-linked (GlcNAc...) asparagine; by host glycosylation sites follow: Asn-433, Asn-454, Asn-561, Asn-664, Asn-684, Asn-703, Asn-725, Asn-771, Asn-776, and Asn-793. Fusion peptide stretches follow at residues 901–922 and 920–940; these read SLLEDLLFNKVKLSDVGFVEAY and EAYNNCTGGSEIRDLLCVQSF. N-linked (GlcNAc...) asparagine; by host glycosylation is present at Asn-924. Cys-925 and Cys-936 are joined by a disulfide. The tract at residues 1001–1051 is heptad repeat 1; it reads QKLIANAFNKALLSIQNGFTATNSALAKIQSVVNANAQALNSLLQQLFNKF. Residues 1030–1074 are a coiled coil; it reads QSVVNANAQALNSLLQQLFNKFGAISSSLQEILSRLDNLEAQVQI. 8 N-linked (GlcNAc...) asparagine; by host glycosylation sites follow: Asn-1181, Asn-1211, Asn-1221, Asn-1226, Asn-1240, Asn-1247, Asn-1255, and Asn-1276. Residues 1245–1284 form a heptad repeat 2 region; that stretch reads APNLTFNSHINATFLDLYYEMNVIQESIKSLNSSFINLKE. A coiled-coil region spans residues 1257 to 1285; that stretch reads TFLDLYYEMNVIQESIKSLNSSFINLKEI. Residues 1296–1316 traverse the membrane as a helical segment; sequence WYIWLLIVILFIIFLMILFFI. The Cytoplasmic segment spans residues 1317–1351; it reads CCCTGCGSACFSKCHNCCDEYGGHNDFVIKASHDD. A KxHxx motif is present at residues 1347–1351; the sequence is ASHDD.

It belongs to the betacoronaviruses spike protein family. Homotrimer; each monomer consists of a S1 and a S2 subunit. The resulting peplomers protrude from the virus surface as spikes. In terms of processing, specific enzymatic cleavages in vivo yield mature proteins. The precursor is processed into S1 and S2 by host cell furin or another cellular protease to yield the mature S1 and S2 proteins. Additionally, a second cleavage leads to the release of a fusion peptide after viral attachment to host cell receptor. The cytoplasmic Cys-rich domain is palmitoylated. Spike glycoprotein is digested within host endosomes.

Its subcellular location is the virion membrane. It is found in the host endoplasmic reticulum-Golgi intermediate compartment membrane. It localises to the host cell membrane. In terms of biological role, attaches the virion to the cell membrane by interacting with host receptor, initiating the infection. Mediates fusion of the virion and cellular membranes by acting as a class I viral fusion protein. Under the current model, the protein has at least three conformational states: pre-fusion native state, pre-hairpin intermediate state, and post-fusion hairpin state. During viral and target cell membrane fusion, the coiled coil regions (heptad repeats) assume a trimer-of-hairpins structure, positioning the fusion peptide in close proximity to the C-terminal region of the ectodomain. The formation of this structure appears to drive apposition and subsequent fusion of viral and target cell membranes. Its function is as follows. Acts as a viral fusion peptide which is unmasked following S2 cleavage occurring upon virus endocytosis. In Human coronavirus HKU1 (isolate N2) (HCoV-HKU1), this protein is Spike glycoprotein.